A 422-amino-acid chain; its full sequence is Protein krasavietz (422 aa).

Positions 1–26 are disordered; it reads MSQKTERPVLSGQRIKTRKRDEREKY. A W2 domain is found at 244-415; the sequence is KLHKAQASQE…QSAEEESESE (172 aa). 3 positions are modified to phosphoserine: serine 407, serine 412, and serine 414.

This sequence belongs to the BZW family. As to expression, expressed in mushroom bodies.

Its function is as follows. May be involved in memory formation. The chain is Protein krasavietz (kra) from Drosophila melanogaster (Fruit fly).